A 50-amino-acid polypeptide reads, in one-letter code: Large ribosomal subunit protein bL33B (50 aa).

It belongs to the bacterial ribosomal protein bL33 family.

This Mesomycoplasma hyopneumoniae (strain 7448) (Mycoplasma hyopneumoniae) protein is Large ribosomal subunit protein bL33B.